The chain runs to 85 residues: Large ribosomal subunit protein bL27 (85 aa).

The segment at 1–22 is disordered; that stretch reads MAHKKGQGSTQNNRDSAGRRLG.

The protein belongs to the bacterial ribosomal protein bL27 family.

The sequence is that of Large ribosomal subunit protein bL27 from Sulfurimonas denitrificans (strain ATCC 33889 / DSM 1251) (Thiomicrospira denitrificans (strain ATCC 33889 / DSM 1251)).